A 78-amino-acid chain; its full sequence is ATP synthase subunit c (78 aa).

2 helical membrane passes run 11 to 31 (FIGAGLAAIGSGAAAIGVGHV) and 53 to 73 (LFIGIAFAEALGIFAFLVALL).

The protein belongs to the ATPase C chain family. F-type ATPases have 2 components, F(1) - the catalytic core - and F(0) - the membrane proton channel. F(1) has five subunits: alpha(3), beta(3), gamma(1), delta(1), epsilon(1). F(0) has four main subunits: a(1), b(1), b'(1) and c(10-14). The alpha and beta chains form an alternating ring which encloses part of the gamma chain. F(1) is attached to F(0) by a central stalk formed by the gamma and epsilon chains, while a peripheral stalk is formed by the delta, b and b' chains.

Its subcellular location is the cell inner membrane. Its function is as follows. F(1)F(0) ATP synthase produces ATP from ADP in the presence of a proton or sodium gradient. F-type ATPases consist of two structural domains, F(1) containing the extramembraneous catalytic core and F(0) containing the membrane proton channel, linked together by a central stalk and a peripheral stalk. During catalysis, ATP synthesis in the catalytic domain of F(1) is coupled via a rotary mechanism of the central stalk subunits to proton translocation. In terms of biological role, key component of the F(0) channel; it plays a direct role in translocation across the membrane. A homomeric c-ring of between 10-14 subunits forms the central stalk rotor element with the F(1) delta and epsilon subunits. This Jannaschia sp. (strain CCS1) protein is ATP synthase subunit c.